The following is a 420-amino-acid chain: MTKWKRANPNGTRDYLFEECTLIEEVEQKLRRTFLERGYEEIRTPTIEFYDVFAFQSRPIDEEKMYKFFDEKGRIIVLRPDMTIPLARVVGTQRCDTPLKVTYSGNVFRANESLAGKYNEIVQSGIEVIGIDNVRAEIECVISVIQSLQKLKVQSFTIEIGQVQLYKCIVKKLSIHEEEEKVLRTYIESKNYASLSNFIRDKKLDRCDETVKLLEKLPRLFGNLEVIEEAEKLASSNEMKMAITRVKEIYEAIEKLGYGSYISIDLGMIQHLDYYTGVIFKGYIYEIGEEIVSGGRYDELIGNFGEMLPAVGLAVQVNQIVKALQEQQEPYERKRIDIMIHYELNRLAEAERLRNLLQKDGKKVALSLFSNLNDTFQFARKNQIVTVVEAKSESLVEYVWKEKWVVQKEGETSCVTFKLR.

This sequence belongs to the class-II aminoacyl-tRNA synthetase family. HisZ subfamily. Heteromultimer composed of HisG and HisZ subunits.

Its subcellular location is the cytoplasm. Its pathway is amino-acid biosynthesis; L-histidine biosynthesis; L-histidine from 5-phospho-alpha-D-ribose 1-diphosphate: step 1/9. Required for the first step of histidine biosynthesis. May allow the feedback regulation of ATP phosphoribosyltransferase activity by histidine. The protein is ATP phosphoribosyltransferase regulatory subunit of Bacillus thuringiensis (strain Al Hakam).